Reading from the N-terminus, the 399-residue chain is Elongation factor Tu (399 aa).

One can recognise a tr-type G domain in the interval 10–204 (KPHVNIGTIG…AVDASIPEPE (195 aa)). The G1 stretch occupies residues 19–26 (GHVDHGKT). Residue 19-26 (GHVDHGKT) participates in GTP binding. Thr26 contacts Mg(2+). Residues 60-64 (GITIN) form a G2 region. Residues 81 to 84 (DCPG) form a G3 region. GTP is bound by residues 81–85 (DCPGH) and 136–139 (NKCD). Residues 136–139 (NKCD) form a G4 region. Residues 174–176 (SGL) are G5.

This sequence belongs to the TRAFAC class translation factor GTPase superfamily. Classic translation factor GTPase family. EF-Tu/EF-1A subfamily. As to quaternary structure, monomer.

Its subcellular location is the cytoplasm. It carries out the reaction GTP + H2O = GDP + phosphate + H(+). In terms of biological role, GTP hydrolase that promotes the GTP-dependent binding of aminoacyl-tRNA to the A-site of ribosomes during protein biosynthesis. This is Elongation factor Tu from Prochlorococcus marinus (strain MIT 9313).